We begin with the raw amino-acid sequence, 185 residues long: Ribosome-recycling factor (185 aa).

This sequence belongs to the RRF family.

It localises to the cytoplasm. Its function is as follows. Responsible for the release of ribosomes from messenger RNA at the termination of protein biosynthesis. May increase the efficiency of translation by recycling ribosomes from one round of translation to another. The sequence is that of Ribosome-recycling factor from Arthrobacter sp. (strain FB24).